The primary structure comprises 379 residues: ATP-sensitive inward rectifier potassium channel 10 (379 aa).

Over 1 to 61 the chain is Cytoplasmic; the sequence is MTSVAKVYYS…LKDLWTTFID (61 aa). Arg36 contributes to the 1,2-dioctanoyl-sn-glycero-3-phospho-(1D-myo-inositol-4,5-bisphosphate) binding site. The chain crosses the membrane as a helical span at residues 62–88; the sequence is MQWRYKLLLFSATFAGTWFLFGVVWYL. Topologically, residues 89-114 are extracellular; that stretch reads VAVAHGDLLELDPPANHTPCVVQVHT. A disulfide bond links Cys108 and Cys140. Positions 115 to 131 form an intramembrane region, discontinuously helical; Pore-forming; that stretch reads LTGAFLFSLESQTTIGY. The short motif at 128-133 is the Selectivity filter element; that stretch reads TIGYGF. Residues 132 to 140 lie on the Extracellular side of the membrane; it reads GFRYISEEC. A helical membrane pass occupies residues 141-166; that stretch reads PLAIVLLIAQLVLTTILEIFITGTFL. Over 167–379 the chain is Cytoplasmic; the sequence is AKIARPKKRA…SALSVRISNV (213 aa). 1,2-dioctanoyl-sn-glycero-3-phospho-(1D-myo-inositol-4,5-bisphosphate) contacts are provided by Lys168, Arg171, and Lys173. 210–217 provides a ligand contact to ATP; sequence GCQVTGKL.

It belongs to the inward rectifier-type potassium channel (TC 1.A.2.1) family. KCNJ10 subfamily. In terms of assembly, homotetramer. In kidney cells, it forms heteromeric channels with Kir5.1/KCNJ16; this interaction is required for KCNJ16 localization to the basolateral membrane. Interacts with MAGI1, alone and possibly as a heteromer with KCNJ16; this interaction may facilitate KCNJ10/KCNJ16 potassium channel expression at the basolateral membrane in kidney cells. Interacts with PATJ. In terms of tissue distribution, expressed in kidney (at protein level). In the nephron, expressed in the distal convoluted tubule, the connecting tubule, the collecting duct and cortical thick ascending limbs.

It is found in the membrane. The protein resides in the basolateral cell membrane. The enzyme catalyses K(+)(in) = K(+)(out). With respect to regulation, channel activity is strongly regulated by variations of cytosolic pH; channels are activated by alkaline and inhibited by acidic pH values. Inhibited by Ba(2+) and Cs(+). Activated by phosphatidylinositol 4,5 biphosphate (PtdIns(4,5)P2). Its function is as follows. May be responsible for potassium buffering action of glial cells in the brain. Inward rectifier potassium channels are characterized by a greater tendency to allow potassium to flow into the cell rather than out of it. Their voltage dependence is regulated by the concentration of extracellular potassium; as external potassium is raised, the voltage range of the channel opening shifts to more positive voltages. The inward rectification is mainly due to the blockage of outward current by internal magnesium. Can be blocked by extracellular barium and cesium. In the kidney, together with KCNJ16, mediates basolateral K(+) recycling in distal tubules; this process is critical for Na(+) reabsorption at the tubules. This Homo sapiens (Human) protein is ATP-sensitive inward rectifier potassium channel 10.